An 88-amino-acid polypeptide reads, in one-letter code: Apolipoprotein C-I (88 aa).

The first 26 residues, 1–26 (MRLFLSLPVWVAVLAMVLEGPAPAQA), serve as a signal peptide directing secretion.

This sequence belongs to the apolipoprotein C1 family.

The protein resides in the secreted. Inhibitor of lipoprotein binding to the low density lipoprotein (LDL) receptor, LDL receptor-related protein, and very low density lipoprotein (VLDL) receptor. Associates with high density lipoproteins (HDL) and the triacylglycerol-rich lipoproteins in the plasma and makes up about 10% of the protein of the VLDL and 2% of that of HDL. Appears to interfere directly with fatty acid uptake and is also the major plasma inhibitor of cholesteryl ester transfer protein (CETP). Binds free fatty acids and reduces their intracellular esterification. Modulates the interaction of APOE with beta-migrating VLDL and inhibits binding of beta-VLDL to the LDL receptor-related protein. This chain is Apolipoprotein C-I (APOC1), found in Ursus maritimus (Polar bear).